The following is a 396-amino-acid chain: CCA-adding enzyme (396 aa).

Positions 32 and 35 each coordinate ATP. The CTP site is built by Gly-32 and Arg-35. The Mg(2+) site is built by Asp-45 and Asp-47. 5 residues coordinate ATP: Arg-116, Asp-159, Arg-162, Arg-165, and Arg-168. CTP is bound by residues Arg-116, Asp-159, Arg-162, Arg-165, and Arg-168.

It belongs to the tRNA nucleotidyltransferase/poly(A) polymerase family. Bacterial CCA-adding enzyme type 3 subfamily. As to quaternary structure, homodimer. Mg(2+) is required as a cofactor.

It catalyses the reaction a tRNA precursor + 2 CTP + ATP = a tRNA with a 3' CCA end + 3 diphosphate. It carries out the reaction a tRNA with a 3' CCA end + 2 CTP + ATP = a tRNA with a 3' CCACCA end + 3 diphosphate. In terms of biological role, catalyzes the addition and repair of the essential 3'-terminal CCA sequence in tRNAs without using a nucleic acid template. Adds these three nucleotides in the order of C, C, and A to the tRNA nucleotide-73, using CTP and ATP as substrates and producing inorganic pyrophosphate. tRNA 3'-terminal CCA addition is required both for tRNA processing and repair. Also involved in tRNA surveillance by mediating tandem CCA addition to generate a CCACCA at the 3' terminus of unstable tRNAs. While stable tRNAs receive only 3'-terminal CCA, unstable tRNAs are marked with CCACCA and rapidly degraded. This chain is CCA-adding enzyme, found in Lactobacillus delbrueckii subsp. bulgaricus (strain ATCC BAA-365 / Lb-18).